The following is a 284-amino-acid chain: 2,3,4,5-tetrahydropyridine-2,6-dicarboxylate N-succinyltransferase (284 aa).

2 residues coordinate substrate: arginine 111 and aspartate 148.

The protein belongs to the transferase hexapeptide repeat family. As to quaternary structure, homotrimer.

It is found in the cytoplasm. It carries out the reaction (S)-2,3,4,5-tetrahydrodipicolinate + succinyl-CoA + H2O = (S)-2-succinylamino-6-oxoheptanedioate + CoA. The protein operates within amino-acid biosynthesis; L-lysine biosynthesis via DAP pathway; LL-2,6-diaminopimelate from (S)-tetrahydrodipicolinate (succinylase route): step 1/3. In Brucella melitensis biotype 2 (strain ATCC 23457), this protein is 2,3,4,5-tetrahydropyridine-2,6-dicarboxylate N-succinyltransferase.